Consider the following 339-residue polypeptide: Fe-S cluster assembly protein DRE2 (339 aa).

Residues 1–157 (MTRILLLLHP…KKLSSTHAAV (157 aa)) form an N-terminal SAM-like domain region. A linker region spans residues 158 to 206 (GLTDTSASNTDEENDDVNSKRKLQETKLAYFSESDDEDEEDQIIDENNL). 4 residues coordinate [2Fe-2S] cluster: Cys221, Cys233, Cys236, and Cys238. Residues 221–238 (CELPNGKKRRKACKDCTC) are fe-S binding site A. The [4Fe-4S] cluster site is built by Cys302, Cys305, Cys313, and Cys316. 2 short sequence motifs (cx2C motif) span residues 302-305 (CSSC) and 313-316 (CDGC). The fe-S binding site B stretch occupies residues 302–316 (CSSCSLGDAFRCDGC).

It belongs to the anamorsin family. Monomer. Interacts with TAH18. Interacts with MIA40. Requires [2Fe-2S] cluster as cofactor. The cofactor is [4Fe-4S] cluster.

Its subcellular location is the cytoplasm. The protein resides in the mitochondrion intermembrane space. Functionally, component of the cytosolic iron-sulfur (Fe-S) protein assembly (CIA) machinery required for the maturation of extramitochondrial Fe-S proteins. Part of an electron transfer chain functioning in an early step of cytosolic Fe-S biogenesis, facilitating the de novo assembly of a [4Fe-4S] cluster on the scaffold complex CFD1-NBP35. Electrons are transferred to DRE2 from NADPH via the FAD- and FMN-containing protein TAH18. TAH18-DRE2 are also required for the assembly of the diferric tyrosyl radical cofactor of ribonucleotide reductase (RNR), probably by providing electrons for reduction during radical cofactor maturation in the catalytic small subunit RNR2. This is Fe-S cluster assembly protein DRE2 from Debaryomyces hansenii (strain ATCC 36239 / CBS 767 / BCRC 21394 / JCM 1990 / NBRC 0083 / IGC 2968) (Yeast).